The primary structure comprises 163 residues: uncharacterized protein (163 aa).

A disordered region spans residues 1 to 54; the sequence is MGKSARLRRSQTSSPENVLLGKDSSDDPYRSDSETESNSSSGTESNMSSDSTTS. Basic and acidic residues predominate over residues 23–33; it reads DSSDDPYRSDS. The segment covering 36 to 52 has biased composition (low complexity); it reads ESNSSSGTESNMSSDST. The stretch at 69 to 143 forms a coiled coil; sequence LRTELAEMEM…VEELESSTRE (75 aa).

This is an uncharacterized protein from Arabidopsis thaliana (Mouse-ear cress).